A 411-amino-acid chain; its full sequence is S-adenosylmethionine synthase (411 aa).

Residue His15 participates in ATP binding. Residue Asp17 participates in Mg(2+) binding. Glu43 contributes to the K(+) binding site. Glu56 and Gln100 together coordinate L-methionine. The flexible loop stretch occupies residues 100–110 (QSPDIAQGVNE). ATP-binding positions include 171–173 (DGK), 248–249 (KF), Asp257, 263–264 (RK), Ala280, and Lys284. L-methionine is bound at residue Asp257. An L-methionine-binding site is contributed by Lys288.

The protein belongs to the AdoMet synthase family. Homotetramer; dimer of dimers. Requires Mg(2+) as cofactor. The cofactor is K(+).

The protein resides in the cytoplasm. The enzyme catalyses L-methionine + ATP + H2O = S-adenosyl-L-methionine + phosphate + diphosphate. Its pathway is amino-acid biosynthesis; S-adenosyl-L-methionine biosynthesis; S-adenosyl-L-methionine from L-methionine: step 1/1. Its function is as follows. Catalyzes the formation of S-adenosylmethionine (AdoMet) from methionine and ATP. The overall synthetic reaction is composed of two sequential steps, AdoMet formation and the subsequent tripolyphosphate hydrolysis which occurs prior to release of AdoMet from the enzyme. This is S-adenosylmethionine synthase from Synechococcus sp. (strain CC9605).